Reading from the N-terminus, the 101-residue chain is Biogenesis of lysosome-related organelles complex 1 subunit BLS1 (101 aa).

It belongs to the BLOC1S1 family. In terms of assembly, component of the biogenesis of lysosome-related organelles complex-1 (BLOC-1).

The protein resides in the endosome. Component of the biogenesis of lysosome-related organelles complex-1 (BLOC-1), a complex involved in endosomal cargo sorting. The polypeptide is Biogenesis of lysosome-related organelles complex 1 subunit BLS1 (BLS1) (Zygosaccharomyces rouxii (strain ATCC 2623 / CBS 732 / NBRC 1130 / NCYC 568 / NRRL Y-229)).